Reading from the N-terminus, the 406-residue chain is MARPRTRSVARMEATAAAAAAAEEEEAGNPDGAEGAAVVAVAPEAAAEGPNEPNAGEASREPDAGQASREPDVAGPSRQPGAAGPSREPGAAGGPRQPGAAGGPWQLVPNAAGPAVAPYVEDIDRYLRSLEGREMAKCLDAVQFCTAEESRRPIVNYDQEIQGGHINMRGKLVNWMEELVYGFNLWDNILYLAVSYVDRFLSRNVVNRERLQLLGTSALFVASKYEDRCHPSARFFSSITADTYTTQQVVAMEANILSFLNFQMGSPTVITFLRRFLFSCRGSNRPINIRLELMCIYLAELSLLDDYNIRFLPSIVAAACLFVGKFTLNPNTRPWNLSVQRITGYKVSDIEDCIRSIHDLQAGRKWSNLRAIRSKYEDDAFERVSTIPSPNTIKPSFLRDLKYVNG.

The tract at residues 1–107 (MARPRTRSVA…PGAAGGPWQL (107 aa)) is disordered. Composition is skewed to low complexity over residues 11–21 (RMEATAAAAAA) and 29–57 (NPDG…NAGE).

The protein belongs to the cyclin family. Cyclin F subfamily.

The protein is Putative cyclin-F3-2 (CYCF3-2) of Oryza sativa subsp. japonica (Rice).